The primary structure comprises 361 residues: tRNA-specific 2-thiouridylase MnmA (361 aa).

Residues 8–15 and Met-35 contribute to the ATP site; that span reads AMSGGVDS. The interaction with target base in tRNA stretch occupies residues 95-97; that stretch reads NPD. Cys-100 functions as the Nucleophile in the catalytic mechanism. Cys-100 and Cys-196 are disulfide-bonded. Gly-124 serves as a coordination point for ATP. The segment at 146–148 is interaction with tRNA; it reads KDQ. Residue Cys-196 is the Cysteine persulfide intermediate of the active site. Residues 303–304 are interaction with tRNA; that stretch reads RY.

This sequence belongs to the MnmA/TRMU family.

Its subcellular location is the cytoplasm. It carries out the reaction S-sulfanyl-L-cysteinyl-[protein] + uridine(34) in tRNA + AH2 + ATP = 2-thiouridine(34) in tRNA + L-cysteinyl-[protein] + A + AMP + diphosphate + H(+). Functionally, catalyzes the 2-thiolation of uridine at the wobble position (U34) of tRNA, leading to the formation of s(2)U34. The chain is tRNA-specific 2-thiouridylase MnmA from Chlamydia pneumoniae (Chlamydophila pneumoniae).